Reading from the N-terminus, the 158-residue chain is Aspartate carbamoyltransferase regulatory chain (158 aa).

Zn(2+)-binding residues include C111, C116, C140, and C143.

The protein belongs to the PyrI family. Contains catalytic and regulatory chains. Zn(2+) serves as cofactor.

Involved in allosteric regulation of aspartate carbamoyltransferase. In Metallosphaera sedula (strain ATCC 51363 / DSM 5348 / JCM 9185 / NBRC 15509 / TH2), this protein is Aspartate carbamoyltransferase regulatory chain.